The chain runs to 208 residues: Uracil phosphoribosyltransferase (208 aa).

5-phospho-alpha-D-ribose 1-diphosphate is bound by residues arginine 77, arginine 102, and 129-137 (DPMLATGNS). Residues isoleucine 193 and 198–200 (GDA) contribute to the uracil site. Aspartate 199 is a 5-phospho-alpha-D-ribose 1-diphosphate binding site.

The protein belongs to the UPRTase family. Mg(2+) serves as cofactor.

The enzyme catalyses UMP + diphosphate = 5-phospho-alpha-D-ribose 1-diphosphate + uracil. The protein operates within pyrimidine metabolism; UMP biosynthesis via salvage pathway; UMP from uracil: step 1/1. Its activity is regulated as follows. Allosterically activated by GTP. Functionally, catalyzes the conversion of uracil and 5-phospho-alpha-D-ribose 1-diphosphate (PRPP) to UMP and diphosphate. In Mycoplasmopsis pulmonis (strain UAB CTIP) (Mycoplasma pulmonis), this protein is Uracil phosphoribosyltransferase.